The chain runs to 912 residues: LPS-assembly protein LptD (912 aa).

The signal sequence occupies residues 1–27 (MLYSPLYQSIRLILFGALGLSSLTVSA).

It belongs to the LptD family. Component of the lipopolysaccharide transport and assembly complex. Interacts with LptE and LptA.

Its subcellular location is the cell outer membrane. Together with LptE, is involved in the assembly of lipopolysaccharide (LPS) at the surface of the outer membrane. The sequence is that of LPS-assembly protein LptD from Psychrobacter arcticus (strain DSM 17307 / VKM B-2377 / 273-4).